The sequence spans 315 residues: 31 kDa ribonucleoprotein, chloroplastic (315 aa).

The transit peptide at 1–71 (MSCATKPIIK…LSPKKKTSVS (71 aa)) directs the protein to the chloroplast. The segment at 114-133 (AGESDEVEADEEEEEFQEPP) is disordered. Residues 115–133 (GESDEVEADEEEEEFQEPP) are compositionally biased toward acidic residues. RRM domains follow at residues 136-214 (AKLF…KAAR) and 230-308 (YRIY…VAED).

Its subcellular location is the plastid. It localises to the chloroplast. Its function is as follows. Could be involved in splicing and/or processing of chloroplast RNA's. This chain is 31 kDa ribonucleoprotein, chloroplastic, found in Nicotiana sylvestris (Wood tobacco).